A 103-amino-acid polypeptide reads, in one-letter code: Histone H4 (103 aa).

The span at 1-14 shows a compositional bias: gly residues; the sequence is MSGRGKGGKGLGKG. The tract at residues 1 to 20 is disordered; that stretch reads MSGRGKGGKGLGKGGAKRHR. At lysine 6 the chain carries N6-acetyl-N6-methyllysine; alternate. 3 positions are modified to N6-methyllysine; alternate: lysine 6, lysine 9, and lysine 13. The residue at position 13 (lysine 13) is an N6-acetyl-N6-methyllysine; alternate. A DNA-binding region spans residues 17-21; it reads KRHRK. Position 92 is an N6-glutaryllysine (lysine 92).

The protein belongs to the histone H4 family. The nucleosome is a histone octamer containing two molecules each of H2A, H2B, H3 and H4 assembled in one H3-H4 heterotetramer and two H2A-H2B heterodimers. The octamer wraps approximately 147 bp of DNA. In terms of processing, glutarylation at Lys-92 (H4K91glu) destabilizes nucleosomes by promoting dissociation of the H2A-H2B dimers from nucleosomes.

The protein resides in the nucleus. It localises to the chromosome. Core component of nucleosome. Nucleosomes wrap and compact DNA into chromatin, limiting DNA accessibility to the cellular machineries which require DNA as a template. Histones thereby play a central role in transcription regulation, DNA repair, DNA replication and chromosomal stability. DNA accessibility is regulated via a complex set of post-translational modifications of histones, also called histone code, and nucleosome remodeling. The chain is Histone H4 (H4.1) from Phanerodontia chrysosporium (White-rot fungus).